We begin with the raw amino-acid sequence, 3114 residues long: Centromere protein F (3114 aa).

Residues 1–481 (MSWALEEWKE…IKENELRRSM (481 aa)) are interaction with SNAP25 and required for localization to the cytoplasm. Positions 13–131 (PTRALQKIQE…KSELERSQQA (119 aa)) form a coiled coil. Residue serine 106 is modified to Phosphoserine. 3 positions are modified to phosphothreonine: threonine 144, threonine 151, and threonine 154. Position 158 is a phosphotyrosine (tyrosine 158). Positions 211-235 (QASSSVFSWQQEKTPSHLSSNSQRT) are enriched in polar residues. The disordered stretch occupies residues 211 to 236 (QASSSVFSWQQEKTPSHLSSNSQRTP). 2 positions are modified to phosphoserine: serine 242 and serine 276. Positions 280–685 (LDQLKAQNQE…SVEIRNLHNV (406 aa)) form a coiled coil. Residues serine 773, serine 783, serine 821, serine 834, serine 838, and serine 876 each carry the phosphoserine modification. Coiled-coil stretches lie at residues 899–989 (VAET…LNQE) and 1196–1244 (LEVK…IRGD). Serine 1248, serine 1255, and serine 1259 each carry phosphoserine. A coiled-coil region spans residues 1549–1646 (VEELESLCEV…ELEVARLQLQ (98 aa)). 3 positions are modified to phosphoserine: serine 1651, serine 1652, and serine 1654. 2 disordered regions span residues 1667-1690 (RNES…KHDV) and 1710-1746 (TETG…SECI). Residues 1669-1690 (ESCDISKEHTSETTERTPKHDV) are compositionally biased toward basic and acidic residues. The residue at position 1726 (serine 1726) is a Phosphoserine. Threonine 1862 carries the phosphothreonine modification. A phosphoserine mark is found at serine 1868 and serine 1892. Coiled coils occupy residues 1890 to 2078 (NDSW…LQAR) and 2107 to 2891 (LSST…LCSQ). Positions 2026-2351 (LLKDKTHLQE…ERELEIARTN (326 aa)) are interaction with NDE1 and NDEL1. 2 tandem repeats follow at residues 2111–2290 (QEEV…QSLD) and 2293–2472 (IEEE…QNLS). Residues 2111–2472 (QEEVHQLRRG…ACKAKEQNLS (362 aa)) are 2 X 177 AA tandem repeats. The tract at residues 2392–2829 (SEKENLTNEL…QAAQEKQKTG (438 aa)) is sufficient for self-association. Positions 2392–3017 (SEKENLTNEL…ATRTSPRLAA (626 aa)) are sufficient for centromere localization. Residues serine 2416 and serine 2417 each carry the phosphoserine modification. Residue lysine 2779 is modified to N6-acetyllysine. The interval 2831–3017 (VMDTKVDELT…ATRTSPRLAA (187 aa)) is sufficient for nuclear localization. A disordered region spans residues 2891 to 2977 (QQSKQDSRGS…AEDTEGTEFE (87 aa)). Phosphoserine occurs at positions 2900, 2911, 2922, and 2936. Positions 2919-2936 (KRLSSGQNKASGKRQRSS) match the Nuclear localization signal motif. At threonine 2949 the chain carries Phosphothreonine. Phosphoserine is present on residues serine 2952, serine 2998, serine 3023, and serine 3026. The interval 3024 to 3114 (PLSLGKENLA…SNGSENCKVQ (91 aa)) is disordered. The span at 3033 to 3045 (AESSKPTAGGSRS) shows a compositional bias: polar residues. Phosphoserine occurs at positions 3054, 3079, and 3083. Residues 3079 to 3089 (SPTDSPREGLR) are compositionally biased toward basic and acidic residues. Positions 3105 to 3114 (SNGSENCKVQ) are enriched in polar residues. At cysteine 3111 the chain carries Cysteine methyl ester. Cysteine 3111 carries the S-farnesyl cysteine lipid modification. Residues 3112-3114 (KVQ) constitute a propeptide, removed in mature form.

This sequence belongs to the centromere protein F family. In terms of assembly, interacts with and STX4 (via C-terminus). Interacts (via N-terminus) with RBL1, RBL2 and SNAP25. Self-associates. Interacts with CENP-E and BUBR1 (via C-terminus). Interacts (via C-terminus) with NDE1, NDEL1 and RB1. Post-translationally, hyperphosphorylated during mitosis.

The protein resides in the cytoplasm. It is found in the perinuclear region. Its subcellular location is the nucleus matrix. The protein localises to the chromosome. It localises to the centromere. The protein resides in the kinetochore. It is found in the cytoskeleton. Its subcellular location is the spindle. Its function is as follows. Required for kinetochore function and chromosome segregation in mitosis. Required for kinetochore localization of dynein, LIS1, NDE1 and NDEL1. Regulates recycling of the plasma membrane by acting as a link between recycling vesicles and the microtubule network though its association with STX4 and SNAP25. Acts as a potential inhibitor of pocket protein-mediated cellular processes during development by regulating the activity of RB proteins during cell division and proliferation. May play a regulatory or permissive role in the normal embryonic cardiomyocyte cell cycle and in promoting continued mitosis in transformed, abnormally dividing neonatal cardiomyocytes. Interaction with RB directs embryonic stem cells toward a cardiac lineage. Involved in the regulation of DNA synthesis and hence cell cycle progression, via its C-terminus. Has a potential role regulating skeletal myogenesis and in cell differentiation in embryogenesis. Involved in dendritic cell regulation of T-cell immunity against chlamydia. This chain is Centromere protein F (CENPF), found in Homo sapiens (Human).